A 118-amino-acid chain; its full sequence is Large ribosomal subunit protein bL19 (118 aa).

This sequence belongs to the bacterial ribosomal protein bL19 family.

In terms of biological role, this protein is located at the 30S-50S ribosomal subunit interface and may play a role in the structure and function of the aminoacyl-tRNA binding site. The protein is Large ribosomal subunit protein bL19 of Campylobacter concisus (strain 13826).